A 160-amino-acid polypeptide reads, in one-letter code: Cytochrome c-type biogenesis protein CcmE (160 aa).

At 1–9 (MRGLKKKRR) the chain is on the cytoplasmic side. Residues 10–30 (IQIIAIAAVALTIATIMIGTA) form a helical; Signal-anchor for type II membrane protein membrane-spanning segment. Residues 31–160 (MRDGINFFRS…DGGYGGASGS (130 aa)) lie on the Periplasmic side of the membrane. 2 residues coordinate heme: His-123 and Tyr-127. The interval 141-160 (VYKDPNATDADGGYGGASGS) is disordered.

Belongs to the CcmE/CycJ family.

The protein localises to the cell inner membrane. In terms of biological role, heme chaperone required for the biogenesis of c-type cytochromes. Transiently binds heme delivered by CcmC and transfers the heme to apo-cytochromes in a process facilitated by CcmF and CcmH. This chain is Cytochrome c-type biogenesis protein CcmE, found in Dinoroseobacter shibae (strain DSM 16493 / NCIMB 14021 / DFL 12).